Here is a 320-residue protein sequence, read N- to C-terminus: Variant surface glycoprotein ILTAT 1.2 (320 aa).

Residues Asn-146, Asn-282, and Asn-295 are each glycosylated (N-linked (GlcNAc...) asparagine). Residues 297–320 (TKATENGVPVAQTQTGGSETTTEK) form a disordered region. Low complexity predominate over residues 308–320 (QTQTGGSETTTEK).

It is found in the cell membrane. Functionally, VSG forms a coat on the surface of the parasite. The trypanosome evades the immune response of the host by expressing a series of antigenically distinct VSGs from an estimated 1000 VSG genes. This chain is Variant surface glycoprotein ILTAT 1.2, found in Trypanosoma brucei brucei.